A 332-amino-acid polypeptide reads, in one-letter code: Phenol 2-monooxygenase, oxygenase component MhpL (332 aa).

Belongs to the TmoE/XamoE family.

It catalyses the reaction phenol + NADH + O2 + H(+) = catechol + NAD(+) + H2O. It participates in aromatic compound metabolism; phenol degradation. Part of a multicomponent enzyme which catalyzes the degradation of phenol and some of its methylated derivatives. This is Phenol 2-monooxygenase, oxygenase component MhpL (mphL) from Acinetobacter pittii (strain PHEA-2).